The primary structure comprises 307 residues: Mitochondrial 2-oxodicarboxylate carrier 2 (307 aa).

A run of 6 helical transmembrane segments spans residues 10–30 (LPFIYQFISGAVAGISELTVM), 76–95 (SRLYRGISSPMLMEAPKRAT), 122–142 (IAAGASAGMTEAAVIVPFELI), 171–191 (GLYKGIESTMWRNALWNGGYF), 215–235 (LIAGAIGGTVGTMLNTPFDVV), and 280–300 (CRLAPGGSLMLVVFTGMMNFF). 3 Solcar repeats span residues 10-106 (LPFI…YQKI), 116-200 (TTQK…VRNS), and 209-299 (QKTR…MMNF).

This sequence belongs to the mitochondrial carrier (TC 2.A.29) family.

The protein resides in the mitochondrion inner membrane. Transports C5-C7 oxodicarboxylates across the inner membranes of mitochondria. Can transport 2-oxoadipate, 2-oxoglutarate, adipate, glutarate, 2-oxopimelate, oxaloacetate, citrate and malate. The main physiological role is probably to supply 2-oxoadipate and 2-oxoglutarate from the mitochondrial matrix to the cytosol where they are used in the biosynthesis of lysine and glutamate, respectively, and in lysine catabolism. The polypeptide is Mitochondrial 2-oxodicarboxylate carrier 2 (ODC2) (Saccharomyces cerevisiae (strain ATCC 204508 / S288c) (Baker's yeast)).